We begin with the raw amino-acid sequence, 303 residues long: Putative S-adenosyl-L-methionine-dependent methyltransferase Mb1931c (303 aa).

S-adenosyl-L-methionine is bound by residues D129 and 158–159 (DL).

This sequence belongs to the UPF0677 family.

Functionally, exhibits S-adenosyl-L-methionine-dependent methyltransferase activity. The protein is Putative S-adenosyl-L-methionine-dependent methyltransferase Mb1931c of Mycobacterium bovis (strain ATCC BAA-935 / AF2122/97).